The chain runs to 125 residues: Phosphoribosyl-AMP cyclohydrolase (125 aa).

D86 contacts Mg(2+). C87 contacts Zn(2+). Mg(2+) is bound by residues D88 and D90. Positions 103 and 110 each coordinate Zn(2+).

It belongs to the PRA-CH family. In terms of assembly, homodimer. Mg(2+) serves as cofactor. The cofactor is Zn(2+).

Its subcellular location is the cytoplasm. It carries out the reaction 1-(5-phospho-beta-D-ribosyl)-5'-AMP + H2O = 1-(5-phospho-beta-D-ribosyl)-5-[(5-phospho-beta-D-ribosylamino)methylideneamino]imidazole-4-carboxamide. It participates in amino-acid biosynthesis; L-histidine biosynthesis; L-histidine from 5-phospho-alpha-D-ribose 1-diphosphate: step 3/9. Functionally, catalyzes the hydrolysis of the adenine ring of phosphoribosyl-AMP. The chain is Phosphoribosyl-AMP cyclohydrolase from Erythrobacter litoralis (strain HTCC2594).